A 210-amino-acid chain; its full sequence is Thymidylate kinase (210 aa).

10–17 (GLEGAGKS) serves as a coordination point for ATP.

This sequence belongs to the thymidylate kinase family.

The enzyme catalyses dTMP + ATP = dTDP + ADP. In terms of biological role, phosphorylation of dTMP to form dTDP in both de novo and salvage pathways of dTTP synthesis. The sequence is that of Thymidylate kinase from Haemophilus influenzae (strain PittGG).